A 325-amino-acid chain; its full sequence is Small ribosomal subunit biogenesis GTPase RsgA (325 aa).

The CP-type G domain maps to 80–241 (LSKQIHIIAS…IIDTPGIKGF (162 aa)). GTP contacts are provided by residues 129 to 132 (NKID) and 183 to 191 (GHSGVGKST). Zn(2+) contacts are provided by cysteine 265, cysteine 270, histidine 272, and cysteine 278.

The protein belongs to the TRAFAC class YlqF/YawG GTPase family. RsgA subfamily. Monomer. Associates with 30S ribosomal subunit, binds 16S rRNA. The cofactor is Zn(2+).

It is found in the cytoplasm. In terms of biological role, one of several proteins that assist in the late maturation steps of the functional core of the 30S ribosomal subunit. Helps release RbfA from mature subunits. May play a role in the assembly of ribosomal proteins into the subunit. Circularly permuted GTPase that catalyzes slow GTP hydrolysis, GTPase activity is stimulated by the 30S ribosomal subunit. In Flavobacterium johnsoniae (strain ATCC 17061 / DSM 2064 / JCM 8514 / BCRC 14874 / CCUG 350202 / NBRC 14942 / NCIMB 11054 / UW101) (Cytophaga johnsonae), this protein is Small ribosomal subunit biogenesis GTPase RsgA.